A 152-amino-acid chain; its full sequence is UPF0266 membrane protein YobD (152 aa).

3 helical membrane passes run 6-26 (LVLI…QFIM), 45-65 (IDSV…VTNH), and 67-87 (ALIT…IFWI).

Belongs to the UPF0266 family.

It is found in the cell inner membrane. The polypeptide is UPF0266 membrane protein YobD (Escherichia coli O157:H7 (strain EC4115 / EHEC)).